Reading from the N-terminus, the 385-residue chain is Acetate kinase (385 aa).

Asparagine 9 contributes to the Mg(2+) binding site. Lysine 16 contributes to the ATP binding site. A substrate-binding site is contributed by arginine 87. Residue aspartate 144 is the Proton donor/acceptor of the active site. ATP-binding positions include 202–206 and 277–279; these read HLGSG and DMR. A Mg(2+)-binding site is contributed by glutamate 373.

It belongs to the acetokinase family. As to quaternary structure, homodimer. Requires Mg(2+) as cofactor. Mn(2+) serves as cofactor.

It localises to the cytoplasm. It catalyses the reaction acetate + ATP = acetyl phosphate + ADP. The protein operates within metabolic intermediate biosynthesis; acetyl-CoA biosynthesis; acetyl-CoA from acetate: step 1/2. In terms of biological role, catalyzes the formation of acetyl phosphate from acetate and ATP. Can also catalyze the reverse reaction. The chain is Acetate kinase from Rickettsia typhi (strain ATCC VR-144 / Wilmington).